Consider the following 315-residue polypeptide: Ankyrin repeat domain-containing protein EMB506, chloroplastic (315 aa).

A chloroplast-targeting transit peptide spans 1–39; sequence MVSSVLSIPPQTCLLPRLPISDSVNCKSKIVYCLSTSVR. Over residues 44-65 the composition is skewed to polar residues; sequence KRQSTARTRSFTETNRRTPSVQ. A disordered region spans residues 44–106; that stretch reads KRQSTARTRS…DNESDWEDDS (63 aa). A compositionally biased stretch (acidic residues) spans 72-104; the sequence is EDPDDGSDSENEYEGEEEDGIGNDLDNESDWED. 5 ANK repeats span residues 151–180, 184–213, 217–246, 250–279, and 283–307; these read KSWK…DIDD, DNQT…NPHL, DGAA…DVNV, EGWT…DKTR, and DGKL…VKLL.

Interacts with AKR. No homodimerization observed. As to expression, expressed in roots, inflorescence stems, flowers, siliques, dry seeds and mature cauline leaves.

Its subcellular location is the plastid. It is found in the chloroplast. Its function is as follows. Involved in the initial differentiation of the proplastid during the embryo development. Also required for correct cotyledon, true leaf and cauline leaf margin development. The polypeptide is Ankyrin repeat domain-containing protein EMB506, chloroplastic (EMB506) (Arabidopsis thaliana (Mouse-ear cress)).